Reading from the N-terminus, the 384-residue chain is Glucans biosynthesis protein C (384 aa).

A run of 10 helical transmembrane segments spans residues alanine 17–tryptophan 37, phenylalanine 54–leucine 74, valine 91–glutamine 111, leucine 140–phenylalanine 160, alanine 173–isoleucine 193, phenylalanine 212–isoleucine 232, phenylalanine 240–leucine 260, threonine 274–glycine 294, alanine 311–threonine 331, and leucine 338–isoleucine 358.

Belongs to the acyltransferase 3 family. OpgC subfamily.

Its subcellular location is the cell membrane. It functions in the pathway glycan metabolism; osmoregulated periplasmic glucan (OPG) biosynthesis. Necessary for the succinyl substitution of periplasmic glucans. Could catalyze the transfer of succinyl residues from the cytoplasmic side of the membrane to the nascent glucan backbones on the periplasmic side of the membrane. The chain is Glucans biosynthesis protein C from Salmonella typhi.